A 246-amino-acid polypeptide reads, in one-letter code: Flavin-dependent thymidylate synthase (246 aa).

Positions 17 to 241 (VTVELVKHSA…PLTYAAFNTN (225 aa)) constitute a ThyX domain. FAD-binding positions include Ser69, 92-94 (RHR), and Glu101. DUMP contacts are provided by residues 89-92 (EFMR), 101-105 (EESGR), and Arg173. A ThyX motif motif is present at residues 92–103 (RHRVGWSYNEES). Residues 189-191 (NAR) and His195 each bind FAD. Arg200 provides a ligand contact to dUMP. The Involved in ionization of N3 of dUMP, leading to its activation role is filled by Arg200.

Belongs to the thymidylate synthase ThyX family. In terms of assembly, homotetramer. Requires FAD as cofactor.

The catalysed reaction is dUMP + (6R)-5,10-methylene-5,6,7,8-tetrahydrofolate + NADPH + H(+) = dTMP + (6S)-5,6,7,8-tetrahydrofolate + NADP(+). Its pathway is pyrimidine metabolism; dTTP biosynthesis. Functionally, catalyzes the reductive methylation of 2'-deoxyuridine-5'-monophosphate (dUMP) to 2'-deoxythymidine-5'-monophosphate (dTMP) while utilizing 5,10-methylenetetrahydrofolate (mTHF) as the methyl donor, and NADPH and FADH(2) as the reductant. The polypeptide is Flavin-dependent thymidylate synthase (Streptomyces avermitilis (strain ATCC 31267 / DSM 46492 / JCM 5070 / NBRC 14893 / NCIMB 12804 / NRRL 8165 / MA-4680)).